Reading from the N-terminus, the 383-residue chain is UDP-N-acetylglucosamine--N-acetylmuramyl-(pentapeptide) pyrophosphoryl-undecaprenol N-acetylglucosamine transferase (383 aa).

UDP-N-acetyl-alpha-D-glucosamine-binding positions include 10–12 (TGG), asparagine 124, arginine 165, serine 190, isoleucine 245, and glutamine 290. Positions 363-383 (SPFGQAREPGQKPARPPDPAS) are disordered.

It belongs to the glycosyltransferase 28 family. MurG subfamily.

It is found in the cell inner membrane. It catalyses the reaction di-trans,octa-cis-undecaprenyl diphospho-N-acetyl-alpha-D-muramoyl-L-alanyl-D-glutamyl-meso-2,6-diaminopimeloyl-D-alanyl-D-alanine + UDP-N-acetyl-alpha-D-glucosamine = di-trans,octa-cis-undecaprenyl diphospho-[N-acetyl-alpha-D-glucosaminyl-(1-&gt;4)]-N-acetyl-alpha-D-muramoyl-L-alanyl-D-glutamyl-meso-2,6-diaminopimeloyl-D-alanyl-D-alanine + UDP + H(+). The protein operates within cell wall biogenesis; peptidoglycan biosynthesis. Functionally, cell wall formation. Catalyzes the transfer of a GlcNAc subunit on undecaprenyl-pyrophosphoryl-MurNAc-pentapeptide (lipid intermediate I) to form undecaprenyl-pyrophosphoryl-MurNAc-(pentapeptide)GlcNAc (lipid intermediate II). In Anaeromyxobacter dehalogenans (strain 2CP-1 / ATCC BAA-258), this protein is UDP-N-acetylglucosamine--N-acetylmuramyl-(pentapeptide) pyrophosphoryl-undecaprenol N-acetylglucosamine transferase.